Consider the following 70-residue polypeptide: Beta sliding clamp (70 aa).

This sequence belongs to the beta sliding clamp family. As to quaternary structure, forms a ring-shaped head-to-tail homodimer around DNA which binds and tethers DNA polymerases and other proteins to the DNA. The DNA replisome complex has a single clamp-loading complex (3 tau and 1 each of delta, delta', psi and chi subunits) which binds 3 Pol III cores (1 core on the leading strand and 2 on the lagging strand) each with a beta sliding clamp dimer. Additional proteins in the replisome are other copies of gamma, psi and chi, Ssb, DNA helicase and RNA primase.

The protein resides in the cytoplasm. Functionally, confers DNA tethering and processivity to DNA polymerases and other proteins. Acts as a clamp, forming a ring around DNA (a reaction catalyzed by the clamp-loading complex) which diffuses in an ATP-independent manner freely and bidirectionally along dsDNA. Initially characterized for its ability to contact the catalytic subunit of DNA polymerase III (Pol III), a complex, multichain enzyme responsible for most of the replicative synthesis in bacteria; Pol III exhibits 3'-5' exonuclease proofreading activity. The beta chain is required for initiation of replication as well as for processivity of DNA replication. The polypeptide is Beta sliding clamp (dnaN) (Rhodobacter capsulatus (Rhodopseudomonas capsulata)).